Consider the following 481-residue polypeptide: 2-succinylbenzoate--CoA ligase (481 aa).

It belongs to the ATP-dependent AMP-binding enzyme family. MenE subfamily.

It catalyses the reaction 2-succinylbenzoate + ATP + CoA = 2-succinylbenzoyl-CoA + AMP + diphosphate. The protein operates within quinol/quinone metabolism; 1,4-dihydroxy-2-naphthoate biosynthesis; 1,4-dihydroxy-2-naphthoate from chorismate: step 5/7. It functions in the pathway quinol/quinone metabolism; menaquinone biosynthesis. Converts 2-succinylbenzoate (OSB) to 2-succinylbenzoyl-CoA (OSB-CoA). This is 2-succinylbenzoate--CoA ligase from Bacillus mycoides (strain KBAB4) (Bacillus weihenstephanensis).